Consider the following 237-residue polypeptide: Ribonuclease 3 (237 aa).

An RNase III domain is found at 8–134; sequence RSALLEKLGV…VIGAVYLDAG (127 aa). Glutamate 47 lines the Mg(2+) pocket. Aspartate 51 is an active-site residue. Mg(2+)-binding residues include aspartate 120 and glutamate 123. Glutamate 123 is a catalytic residue. One can recognise a DRBM domain in the interval 161–229; sequence DPKTSLQEAA…ALSAWTALTN (69 aa).

The protein belongs to the ribonuclease III family. As to quaternary structure, homodimer. Requires Mg(2+) as cofactor.

The protein localises to the cytoplasm. It catalyses the reaction Endonucleolytic cleavage to 5'-phosphomonoester.. In terms of biological role, digests double-stranded RNA. Involved in the processing of primary rRNA transcript to yield the immediate precursors to the large and small rRNAs (23S and 16S). Processes some mRNAs, and tRNAs when they are encoded in the rRNA operon. Processes pre-crRNA and tracrRNA of type II CRISPR loci if present in the organism. In Leifsonia xyli subsp. xyli (strain CTCB07), this protein is Ribonuclease 3.